The chain runs to 419 residues: S-adenosylmethionine synthase (419 aa).

H15 lines the ATP pocket. D17 contacts Mg(2+). E43 is a K(+) binding site. The L-methionine site is built by E56 and Q100. Residues 100 to 110 (QSPDIAQGVNE) are flexible loop. Residues 171–173 (DGK), 248–249 (KF), D257, 263–264 (RK), A280, and K284 each bind ATP. D257 lines the L-methionine pocket. An L-methionine-binding site is contributed by K288.

The protein belongs to the AdoMet synthase family. As to quaternary structure, homotetramer; dimer of dimers. Mg(2+) serves as cofactor. Requires K(+) as cofactor.

The protein localises to the cytoplasm. It catalyses the reaction L-methionine + ATP + H2O = S-adenosyl-L-methionine + phosphate + diphosphate. Its pathway is amino-acid biosynthesis; S-adenosyl-L-methionine biosynthesis; S-adenosyl-L-methionine from L-methionine: step 1/1. Its function is as follows. Catalyzes the formation of S-adenosylmethionine (AdoMet) from methionine and ATP. The overall synthetic reaction is composed of two sequential steps, AdoMet formation and the subsequent tripolyphosphate hydrolysis which occurs prior to release of AdoMet from the enzyme. The polypeptide is S-adenosylmethionine synthase (Prochlorococcus marinus (strain MIT 9313)).